Consider the following 221-residue polypeptide: Small ribosomal subunit protein uS4c (221 aa).

The segment at 26-53 (RKRTDNRCMPGQHRKKRNDSTKKTKNSK) is disordered. Positions 37 to 53 (QHRKKRNDSTKKTKNSK) are enriched in basic residues. In terms of domain architecture, S4 RNA-binding spans 103–161 (MRLDNIVFRLGMAPTIPAARQLVNHGHIVVNNKKVDISSYQCQSQDVISVTKNKTIRTL).

Belongs to the universal ribosomal protein uS4 family. Part of the 30S ribosomal subunit. Contacts protein S5. The interaction surface between S4 and S5 is involved in control of translational fidelity.

Its subcellular location is the plastid. The protein localises to the chloroplast. Functionally, one of the primary rRNA binding proteins, it binds directly to 16S rRNA where it nucleates assembly of the body of the 30S subunit. In terms of biological role, with S5 and S12 plays an important role in translational accuracy. The polypeptide is Small ribosomal subunit protein uS4c (rps4) (Pleurastrum terricola (Filamentous green alga)).